The following is a 252-amino-acid chain: Adenosylcobinamide-GDP ribazoletransferase (252 aa).

Helical transmembrane passes span 4-24 (LLLL…LPYI), 35-55 (LVPM…GGMN), 65-85 (SALV…DGAM), 102-122 (VMAD…ILLL), 178-198 (LLPG…VNNH), 201-221 (LITV…AAWF), and 232-252 (TYGA…TILT).

The protein belongs to the CobS family. It depends on Mg(2+) as a cofactor.

Its subcellular location is the cell inner membrane. The enzyme catalyses alpha-ribazole + adenosylcob(III)inamide-GDP = adenosylcob(III)alamin + GMP + H(+). The catalysed reaction is alpha-ribazole 5'-phosphate + adenosylcob(III)inamide-GDP = adenosylcob(III)alamin 5'-phosphate + GMP + H(+). Its pathway is cofactor biosynthesis; adenosylcobalamin biosynthesis; adenosylcobalamin from cob(II)yrinate a,c-diamide: step 7/7. Functionally, joins adenosylcobinamide-GDP and alpha-ribazole to generate adenosylcobalamin (Ado-cobalamin). Also synthesizes adenosylcobalamin 5'-phosphate from adenosylcobinamide-GDP and alpha-ribazole 5'-phosphate. The polypeptide is Adenosylcobinamide-GDP ribazoletransferase (Trichormus variabilis (strain ATCC 29413 / PCC 7937) (Anabaena variabilis)).